A 1677-amino-acid polypeptide reads, in one-letter code: Zinc finger protein 831 (1677 aa).

A compositionally biased stretch (pro residues) spans 1–26; it reads MEVPEPTCPAPPARDQPAPTPGPPGA. The disordered stretch occupies residues 1–43; the sequence is MEVPEPTCPAPPARDQPAPTPGPPGAPGGQASPHLTLGPVLLP. 2 consecutive C2H2-type zinc fingers follow at residues 144-166 and 172-196; these read YLCPHCGRDCLKPSVLEKHIRSH and FPCATCGIAFKTQSNLYKHRRTQTH. 10 disordered regions span residues 193–250, 270–398, 516–557, 663–931, 950–1062, 1100–1119, 1137–1176, 1216–1243, 1510–1597, and 1620–1677; these read TQTH…SPGA, GSAF…AGLE, WLEP…PSGH, EAAG…VLSA, TPLP…TCEA, NWELGEPPGNAPEDPSSGPL, LTRPQGVPPGWPELALSSHSGTSRSHSTRSPHSTQNPFPS, LRDEGPNGPPGSNGGWTWTSPGEGGPAQ, SAES…GQYG, and LITR…VIEI. Composition is skewed to basic and acidic residues over residues 216–232 and 325–341; these read EGDKAGEPPRPEGRGES and KPWDAKAPEGRLRKCES. The segment covering 376 to 385 has biased composition (gly residues); the sequence is EGGPGPGPGV. A coiled-coil region spans residues 391–423; it reads GAREAGLELEKKRLEERIAQLISHNQAVVDDAQ. Basic and acidic residues-rich tracts occupy residues 517–526, 674–684, 707–727, and 813–834; these read LEPREPRDPW, QDRRTPVHEDI, PTKHGETVARRGDSDRPRVEE, and SGEDKLPSERKKLKVEDLHSWK. Composition is skewed to low complexity over residues 880–894 and 905–919; these read LESSGASLAAASVAL and PLHPAAPAPAEHPSL. Over residues 1153-1170 the composition is skewed to low complexity; that stretch reads SSHSGTSRSHSTRSPHST. Positions 1518–1531 are enriched in polar residues; sequence QTAGRTLTSSSPDS. Basic and acidic residues predominate over residues 1649 to 1662; the sequence is RSLEGMRKQTRVEF.

The chain is Zinc finger protein 831 (ZNF831) from Homo sapiens (Human).